Consider the following 415-residue polypeptide: Polyketide biosynthesis malonyl-ACP decarboxylase PksF (415 aa).

The 402-residue stretch at 6-407 (LPEVVVTGVG…GMNTAVCIQN (402 aa)) folds into the Ketosynthase family 3 (KS3) domain.

It belongs to the thiolase-like superfamily. Beta-ketoacyl-ACP synthases family.

It is found in the cytoplasm. The catalysed reaction is malonyl-[ACP] + H(+) = acetyl-[ACP] + CO2. It functions in the pathway antibiotic biosynthesis; bacillaene biosynthesis. In terms of biological role, involved in some intermediate steps for the synthesis of the antibiotic polyketide bacillaene which is involved in secondary metabolism. It decarboxylates selectively the malonyl group attached on the acyl-carrier-protein AcpK (Mal-AcpK). In Bacillus subtilis (strain 168), this protein is Polyketide biosynthesis malonyl-ACP decarboxylase PksF (pksF).